We begin with the raw amino-acid sequence, 428 residues long: Enolase (428 aa).

Gln-164 is a (2R)-2-phosphoglycerate binding site. Glu-206 acts as the Proton donor in catalysis. Residues Asp-243, Glu-286, and Asp-313 each coordinate Mg(2+). (2R)-2-phosphoglycerate-binding residues include Lys-338, Arg-367, Ser-368, and Lys-389. Catalysis depends on Lys-338, which acts as the Proton acceptor.

It belongs to the enolase family. It depends on Mg(2+) as a cofactor.

The protein resides in the cytoplasm. The protein localises to the secreted. It is found in the cell surface. The enzyme catalyses (2R)-2-phosphoglycerate = phosphoenolpyruvate + H2O. It functions in the pathway carbohydrate degradation; glycolysis; pyruvate from D-glyceraldehyde 3-phosphate: step 4/5. Its function is as follows. Catalyzes the reversible conversion of 2-phosphoglycerate (2-PG) into phosphoenolpyruvate (PEP). It is essential for the degradation of carbohydrates via glycolysis. The chain is Enolase from Dehalococcoides mccartyi (strain ATCC BAA-2266 / KCTC 15142 / 195) (Dehalococcoides ethenogenes (strain 195)).